The sequence spans 711 residues: MEDKSKQCLQDPMCLGIESKHYIGSHGRHQVDFLEEMVDPGEISLDSLIFQRPEDEVSYQKKGGGPASSDNNELEKVLDSILDTSSSSHLHPWDDYVIPEFQEISVTSASSTKTLGDLTTDKKEAGVWTGTTAVENKSIPSLVPKEQDTLEYSIEGQLEGKGRRHGVLASRHPTLPPDGKMPMLPGSAVYLPGQPRHIEEDNDNYDQKHLSPYPCHSSCSHHDGKIKQEDSLYAEYGMPSSNPATPGPDPSLEYICKSETAAAYDNFRSTLGKSSDKAIPVLPTSSTTSQNLYQPLSLNDHQQNAYQSGTVNDAFVPQMHLSYEQYSRPDDPDQSSQYGFDALPRKICLICSDEASGCHYGALTCGSCKVFFKRAIEGQHNYLCAGRNDCIGDKIRRKNCPSCRLKKCCQAGMVLGGRKFKKYNRLKPGRELDRIATSSPMECQQALTRRVSNSSAQEVQYFPELLQILQSIEPEVLYAGYDYTKPETPSALLCSLNQLCERQLLCVVKWSKSLPGFRNMHIDDQIILLQYSWMSLMVFAMGWRSYKHVSGQMLYFAPDLVLNERRMKDSSFYSLCIAMRQLPQEFVKLQISQEEFLCMKALLLLNTIPLEGLKSQSYFDEMRSNYIRELAKAISLRHKGVVASSQRFYHLTKVLDSMHELVKQLHLYCLNTFLQSRALSVEFPEMMTEVISAQLPKILAGMAKPLIFHKK.

The segment at 1–347 is modulating, Pro-Rich; the sequence is MEDKSKQCLQ…YGFDALPRKI (347 aa). 2 NR C4-type zinc fingers span residues 348-368 and 384-408; these read CLIC…CGSC and CAGR…LKKC. Residues 348–420 constitute a DNA-binding region (nuclear receptor); it reads CLICSDEASG…AGMVLGGRKF (73 aa). The region spanning 457-691 is the NR LBD domain; sequence QEVQYFPELL…EFPEMMTEVI (235 aa).

The protein belongs to the nuclear hormone receptor family. NR3 subfamily. In terms of tissue distribution, expressed in all tissues examined: highly expressed in testis and brain. Also expressed in heart, lung, liver, kidney, stomach and small intestine.

It is found in the nucleus. Its function is as follows. The steroid hormones and their receptors are involved in the regulation of eukaryotic gene expression and affect cellular proliferation and differentiation in target tissues. In Rana dybowskii (Dybovsky's frog), this protein is Progesterone receptor (pgr).